A 510-amino-acid chain; its full sequence is AAA-ATPase At3g28540 (510 aa).

The helical transmembrane segment at L7–Y25 threads the bilayer. Residue G246–S253 coordinates ATP. Positions K460–I510 are disordered.

The protein belongs to the AAA ATPase family. BCS1 subfamily. Mg(2+) is required as a cofactor.

It localises to the membrane. The catalysed reaction is ATP + H2O = ADP + phosphate + H(+). The chain is AAA-ATPase At3g28540 from Arabidopsis thaliana (Mouse-ear cress).